We begin with the raw amino-acid sequence, 9702 residues long: Nonribosomal peptide synthetase ungA (9702 aa).

The adenylation 1 stretch occupies residues 248–647; the sequence is EQAQLRPHAP…ARKDTQVKIR (400 aa). One can recognise a Carrier 1 domain in the interval 775-852; sequence APQTEMEYRL…MARAAQEKQT (78 aa). Position 812 is an O-(pantetheine 4'-phosphoryl)serine (S812). Residues 891–1288 form a condensation 1 region; the sequence is DILPCTPLQE…EAVLRHVCSQ (398 aa). Residues 1330–1730 are adenylation 2; the sequence is QRTQQQPDAP…GRKDTQVKIR (401 aa). Residues 1857–1933 enclose the Carrier 2 domain; it reads LPQSPMEKSL…RLARREIQTD (77 aa). S1894 carries the O-(pantetheine 4'-phosphoryl)serine modification. An epimerization 1 region spans residues 1946–2374; the sequence is PFALSPIQQF…ERALEGTAVQ (429 aa). The segment at 2414 to 2842 is condensation 2; the sequence is EDIYPCSPLQ…LDTAILSPQD (429 aa). Residues 2868–3267 are adenylation 3; sequence QVERQPDALA…GRKDTQVKIR (400 aa). The region spanning 3397–3473 is the Carrier 3 domain; it reads APTTEMERHL…EMSQVAKLGS (77 aa). An O-(pantetheine 4'-phosphoryl)serine modification is found at S3434. The tract at residues 3512–3920 is condensation 3; the sequence is EDVFPCTPLQ…LLCDASHHQS (409 aa). Residues 3957–4361 are adenylation 4; it reads KQTQRRSAAQ…GRKDAQVKIR (405 aa). In terms of domain architecture, Carrier 4 spans 4491–4568; sequence PPTTDLERQI…LALSVSAAVD (78 aa). The residue at position 4528 (S4528) is an O-(pantetheine 4'-phosphoryl)serine. The interval 4583-5013 is epimerization 2; it reads ALSPIQQMFA…QAAAQALPLL (431 aa). The segment at 5049 to 5474 is condensation 4; sequence VEDIYPCSPL…ANIISHQDLE (426 aa). An adenylation 5 region spans residues 5496-5899; it reads MQQAESQPGA…GRKDNQVKIH (404 aa). The Carrier 5 domain occupies 6033–6110; sequence TASSPEELEL…LVSHAQGNTA (78 aa). S6070 is subject to O-(pantetheine 4'-phosphoryl)serine. The segment at 6127–6551 is epimerization 3; that stretch reads ELSPIQQLFF…CKSSLEAAAA (425 aa). The interval 6593–6935 is condensation 5; that stretch reads VEDIYPCAPI…TGISVQGGAA (343 aa). An adenylation 6 region spans residues 7047–7447; it reads KRPDAPAIDA…GRRDNQVKVR (401 aa). Residues 7575–7655 form the Carrier 6 domain; that stretch reads GPQTEVERLL…RSARTVQGHV (81 aa). Residue S7613 is modified to O-(pantetheine 4'-phosphoryl)serine. The segment at 7670–8106 is epimerization 4; it reads DLAPVQQMFA…LVTASELLMQ (437 aa). A condensation 6 region spans residues 8144-8588; sequence VEDIYPCSPI…EVDLSTDHDQ (445 aa). The tract at residues 8612–9025 is adenylation 7; the sequence is NTVQKQPHST…GRKDSQVKIR (414 aa). The Carrier 7 domain occupies 9158–9236; it reads SPTAPMERRL…LALLVREGDA (79 aa). Residue S9196 is modified to O-(pantetheine 4'-phosphoryl)serine. The interval 9282–9629 is condensation 7; that stretch reads DVYPTTDLQN…DNLEHDPGTA (348 aa).

It belongs to the NRP synthetase family.

It functions in the pathway secondary metabolite biosynthesis. In terms of biological role, nonribosomal peptide synthetase; part of the gene cluster that mediates the biosynthesis of the unguisins, gamma-aminobutyric acid (GABA)-containing fungal cyclic heptapeptides with the amino acid sequence cyclo-(D-Ala1-D-Val2-L-Phe3-D-Val4-D-Ala5-D-Trp6-GABA7) for unguisin A and cyclo-(D-Ala1-D-Val2-L-Leu3-D-Val4-D-Ala5-D-Trp6-GABA7) for unguisin B. UngA is the main enzyme within the cluster which condenses the 7 residues using its respective 7 modules. The terminal condensation domain (Ct) is involved in cyclization with D-alanine and thereby releasing of unguisins A and B. The alanine racemase ungC provides D-alanine, which is then accepted by the first adenylation domain of ungA. Finally, the hydrolase ungD catalyzes the hydrolysis between the D-tryptophan and GABA residues of unguisins A and B to produce the corresponding linear peptides. This is Nonribosomal peptide synthetase ungA from Aspergillus violaceofuscus (strain CBS 115571).